The sequence spans 338 residues: Nicotinate-nucleotide--dimethylbenzimidazole phosphoribosyltransferase (338 aa).

The Proton acceptor role is filled by Glu305.

The protein belongs to the CobT family.

It catalyses the reaction 5,6-dimethylbenzimidazole + nicotinate beta-D-ribonucleotide = alpha-ribazole 5'-phosphate + nicotinate + H(+). It functions in the pathway nucleoside biosynthesis; alpha-ribazole biosynthesis; alpha-ribazole from 5,6-dimethylbenzimidazole: step 1/2. In terms of biological role, catalyzes the synthesis of alpha-ribazole-5'-phosphate from nicotinate mononucleotide (NAMN) and 5,6-dimethylbenzimidazole (DMB). The sequence is that of Nicotinate-nucleotide--dimethylbenzimidazole phosphoribosyltransferase from Rhizobium johnstonii (strain DSM 114642 / LMG 32736 / 3841) (Rhizobium leguminosarum bv. viciae).